The primary structure comprises 57 residues: Large ribosomal subunit protein eL20 (57 aa).

The protein belongs to the eukaryotic ribosomal protein eL20 family. Part of the 50S ribosomal subunit. Binds 23S rRNA.

The chain is Large ribosomal subunit protein eL20 from Natronomonas pharaonis (strain ATCC 35678 / DSM 2160 / CIP 103997 / JCM 8858 / NBRC 14720 / NCIMB 2260 / Gabara) (Halobacterium pharaonis).